Consider the following 156-residue polypeptide: Small ribosomal subunit protein uS7 (156 aa).

The protein belongs to the universal ribosomal protein uS7 family. In terms of assembly, part of the 30S ribosomal subunit. Contacts proteins S9 and S11.

In terms of biological role, one of the primary rRNA binding proteins, it binds directly to 16S rRNA where it nucleates assembly of the head domain of the 30S subunit. Is located at the subunit interface close to the decoding center, probably blocks exit of the E-site tRNA. The chain is Small ribosomal subunit protein uS7 from Desulforudis audaxviator (strain MP104C).